Consider the following 229-residue polypeptide: Large ribosomal subunit protein uL1 (229 aa).

It belongs to the universal ribosomal protein uL1 family. Part of the 50S ribosomal subunit.

In terms of biological role, binds directly to 23S rRNA. The L1 stalk is quite mobile in the ribosome, and is involved in E site tRNA release. Functionally, protein L1 is also a translational repressor protein, it controls the translation of the L11 operon by binding to its mRNA. The chain is Large ribosomal subunit protein uL1 from Chlorobium chlorochromatii (strain CaD3).